We begin with the raw amino-acid sequence, 56 residues long: Large ribosomal subunit protein bL32 (56 aa).

The tract at residues 1 to 21 (MAVQQNRKTRSRRGMRRSHDA) is disordered. Residues 7–16 (RKTRSRRGMR) are compositionally biased toward basic residues.

Belongs to the bacterial ribosomal protein bL32 family.

This is Large ribosomal subunit protein bL32 from Vibrio cholerae serotype O1 (strain ATCC 39541 / Classical Ogawa 395 / O395).